Reading from the N-terminus, the 921-residue chain is Ubiquitin carboxyl-terminal hydrolase 11 (921 aa).

Low complexity predominate over residues 1–16 (MAAVAADPAAAAVPAS). The tract at residues 1 to 29 (MAAVAADPAAAAVPASAEDRETQPEAMPD) is disordered. Positions 28–133 (PDLDQQWRQI…DQPPIERKVI (106 aa)) constitute a DUSP domain. At Lys194 the chain carries N6-acetyllysine. In terms of domain architecture, USP spans 257 to 889 (CGLTNLGNTC…AAYVLFYQRQ (633 aa)). Residue Cys266 is the Nucleophile of the active site. A disordered region spans residues 592–697 (TKPTSDDDDG…DRTTSPEEAQ (106 aa)). Residue Ser596 is modified to Phosphoserine. The span at 597-624 (DDDDGDEKGDENEDEDVEDDSSSEEEKE) shows a compositional bias: acidic residues. 2 stretches are compositionally biased toward polar residues: residues 657 to 666 (LDNSLHTSQW) and 676 to 697 (FTLQ…EEAQ). A Phosphoserine modification is found at Ser692. The active-site Proton acceptor is His847. The disordered stretch occupies residues 893–921 (RRQSQTASSETPTSPASSSTPNSDIMDVN). The segment covering 895 to 915 (QSQTASSETPTSPASSSTPNS) has biased composition (low complexity). Ser906 carries the post-translational modification Phosphoserine.

The protein belongs to the peptidase C19 family. In terms of assembly, monomer. Associated component of the Polycomb group (PcG) multiprotein PRC1-like complex. Interacts with RANBP9/RANBPM. Interacts with BRCA2. Interacts with CHUK/IKKA. Interacts with NFKBIA. Interacts with SPRY3, RAE1, MYCBP2/PAM, and KCTD6.

The protein localises to the nucleus. The protein resides in the cytoplasm. It localises to the chromosome. It catalyses the reaction Thiol-dependent hydrolysis of ester, thioester, amide, peptide and isopeptide bonds formed by the C-terminal Gly of ubiquitin (a 76-residue protein attached to proteins as an intracellular targeting signal).. In terms of biological role, protease that can remove conjugated ubiquitin from target proteins and polyubiquitin chains. Inhibits the degradation of target proteins by the proteasome. Cleaves preferentially 'Lys-6' and 'Lys-63'-linked ubiquitin chains. Has lower activity with 'Lys-11' and 'Lys-33'-linked ubiquitin chains, and extremely low activity with 'Lys-27', 'Lys-29' and 'Lys-48'-linked ubiquitin chains (in vitro). Plays a role in the regulation of pathways leading to NF-kappa-B activation. Plays a role in the regulation of DNA repair after double-stranded DNA breaks. Acts as a chromatin regulator via its association with the Polycomb group (PcG) multiprotein PRC1-like complex; may act by deubiquitinating components of the PRC1-like comple. Promotes cell proliferation by deubiquitinating phosphorylated E2F1x. The sequence is that of Ubiquitin carboxyl-terminal hydrolase 11 from Rattus norvegicus (Rat).